The primary structure comprises 211 residues: Protein-L-isoaspartate O-methyltransferase (211 aa).

Serine 62 is an active-site residue.

The protein belongs to the methyltransferase superfamily. L-isoaspartyl/D-aspartyl protein methyltransferase family.

It localises to the cytoplasm. The catalysed reaction is [protein]-L-isoaspartate + S-adenosyl-L-methionine = [protein]-L-isoaspartate alpha-methyl ester + S-adenosyl-L-homocysteine. In terms of biological role, catalyzes the methyl esterification of L-isoaspartyl residues in peptides and proteins that result from spontaneous decomposition of normal L-aspartyl and L-asparaginyl residues. It plays a role in the repair and/or degradation of damaged proteins. The sequence is that of Protein-L-isoaspartate O-methyltransferase from Shewanella denitrificans (strain OS217 / ATCC BAA-1090 / DSM 15013).